The chain runs to 886 residues: Translation initiation factor IF-2 (886 aa).

3 disordered regions span residues 1-25 (MSET…LKRP), 50-229 (RRAL…PAEE), and 253-272 (KGAE…TGDE). The segment covering 50–60 (RRALGEPHVLR) has biased composition (basic and acidic residues). The segment covering 63–73 (APALDVVAPAP) has biased composition (low complexity). A compositionally biased stretch (pro residues) spans 74–83 (QAAPPAPTQQ). Over residues 84–106 (PQPRVASRPQPQQRSSSGVILRS) the composition is skewed to low complexity. The span at 107–181 (LTEEEREARS…KRRSESEAKR (75 aa)) shows a compositional bias: basic and acidic residues. Residues 185–225 (GGEPAPAGANAAPRKAPALSAAPGSAAPSGQPGPAGAVGAR) show a composition bias toward low complexity. One can recognise a tr-type G domain in the interval 383 to 553 (SRPPVVTIMG…ALQAELLDLK (171 aa)). The tract at residues 392–399 (GHVDHGKT) is G1. 392–399 (GHVDHGKT) contributes to the GTP binding site. A G2 region spans residues 417–421 (GITQH). The segment at 439–442 (DTPG) is G3. Residues 439-443 (DTPGH) and 493-496 (NKID) each bind GTP. Residues 493 to 496 (NKID) form a G4 region. The tract at residues 529-531 (SAT) is G5.

It belongs to the TRAFAC class translation factor GTPase superfamily. Classic translation factor GTPase family. IF-2 subfamily.

It is found in the cytoplasm. One of the essential components for the initiation of protein synthesis. Protects formylmethionyl-tRNA from spontaneous hydrolysis and promotes its binding to the 30S ribosomal subunits. Also involved in the hydrolysis of GTP during the formation of the 70S ribosomal complex. This is Translation initiation factor IF-2 from Methylocella silvestris (strain DSM 15510 / CIP 108128 / LMG 27833 / NCIMB 13906 / BL2).